The primary structure comprises 214 residues: Galactokinase (214 aa).

Positions 47, 53, 54, and 56 each coordinate alpha-D-galactose. Residues G149, G151, S153, and S154 each contribute to the ATP site. Residue D199 participates in alpha-D-galactose binding. D199 (proton acceptor) is an active-site residue.

It belongs to the GHMP kinase family. GalK subfamily.

It catalyses the reaction alpha-D-galactose + ATP = alpha-D-galactose 1-phosphate + ADP + H(+). It functions in the pathway carbohydrate metabolism; galactose metabolism. In terms of biological role, galactokinase is a key enzyme in the galactose metabolism where it catalyzes the conversion of alpha-D-galactose to galactose 1-phosphate. Can also induce the transcription of the gal genes in response to the organism being challenged with galactose as the sole source of carbon. This is Galactokinase from Candida maltosa (Yeast).